Consider the following 152-residue polypeptide: Ribosome maturation factor RimP (152 aa).

Belongs to the RimP family.

It is found in the cytoplasm. Required for maturation of 30S ribosomal subunits. The polypeptide is Ribosome maturation factor RimP (Aeromonas salmonicida (strain A449)).